We begin with the raw amino-acid sequence, 259 residues long: Phosphate import ATP-binding protein PstB (259 aa).

The 249-residue stretch at 6 to 254 (SKNESVVFDV…PKDKRTEDYI (249 aa)) folds into the ABC transporter domain. 45–52 (GPSGCGKS) serves as a coordination point for ATP.

This sequence belongs to the ABC transporter superfamily. Phosphate importer (TC 3.A.1.7) family. As to quaternary structure, the complex is composed of two ATP-binding proteins (PstB), two transmembrane proteins (PstC and PstA) and a solute-binding protein (PstS).

It localises to the cell membrane. It carries out the reaction phosphate(out) + ATP + H2O = ADP + 2 phosphate(in) + H(+). Part of the ABC transporter complex PstSACB involved in phosphate import. Responsible for energy coupling to the transport system. In Desulfitobacterium hafniense (strain Y51), this protein is Phosphate import ATP-binding protein PstB.